A 130-amino-acid polypeptide reads, in one-letter code: Small ribosomal subunit protein uS11c (130 aa).

It belongs to the universal ribosomal protein uS11 family. As to quaternary structure, part of the 30S ribosomal subunit.

The protein resides in the plastid. Its subcellular location is the chloroplast. This Cycas taitungensis (Prince sago) protein is Small ribosomal subunit protein uS11c.